Consider the following 77-residue polypeptide: U14-theraphotoxin-Cg1a 3 (77 aa).

The signal sequence occupies residues 1-21 (MKTSVLLVILGIAAITVQCTA). Positions 22 to 49 (SESVEQDSLRTFVDTVLGWNAEMASEAR) are excised as a propeptide. Intrachain disulfides connect C50–C64, C57–C69, and C63–C75. Position 77 is a lysine amide (K77).

Belongs to the neurotoxin 10 (Hwtx-1) family. 65 (Jztx-21) subfamily. As to expression, expressed by the venom gland.

It localises to the secreted. Functionally, probable ion channel inhibitor. In Chilobrachys guangxiensis (Chinese earth tiger tarantula), this protein is U14-theraphotoxin-Cg1a 3.